Reading from the N-terminus, the 463-residue chain is Nuclear hormone receptor family member nhr-3 (463 aa).

The segment at residues 50–125 (STICSVCCDE…VGMEPDAIRP (76 aa)) is a DNA-binding region (nuclear receptor). 2 NR C4-type zinc fingers span residues 53-73 (CSVCCDEASGRHYGVVACFGC) and 89-113 (CRYSKKCRIDKAGRNVCRSCRFQKC). Residues 121–131 (DAIRPDRDKTG) are compositionally biased toward basic and acidic residues. The disordered stretch occupies residues 121 to 143 (DAIRPDRDKTGRQKNPRRNTEGS). The 264-residue stretch at 199–462 (EIENIVIQLQ…VLEELLFLDR (264 aa)) folds into the NR LBD domain.

Belongs to the nuclear hormone receptor family.

The protein resides in the nucleus. In terms of biological role, orphan nuclear receptor. The chain is Nuclear hormone receptor family member nhr-3 (nhr-3) from Caenorhabditis elegans.